The sequence spans 215 residues: Disulfide-bond oxidoreductase YfcG (215 aa).

The GST N-terminal domain occupies 1–87; the sequence is MIDLYFAPTP…YLAEKTGLFL (87 aa). Glutathione contacts are provided by residues asparagine 11, glutamine 38, arginine 40, isoleucine 52, 71–72, and arginine 132; that span reads ES. The GST C-terminal domain maps to 90–215; it reads ETRERAATLQ…AQLGDERSDS (126 aa).

Belongs to the GST superfamily. Nu-class GSH transferase family. In terms of assembly, homodimer.

In terms of biological role, exhibits a very robust glutathione (GSH)-dependent disulfide-bond reductase activity toward the model substrate, 2-hydroxyethyl disulfide; the actual physiological substrates are not known. Also has a low GSH-dependent hydroperoxidase activity toward cumene hydroperoxide, but does not reduce H(2)O(2), tert-butyl hydroperoxide, benzyl peroxide, or lauroyl peroxide. Exhibits little or no GSH transferase activity with most typical electrophilic substrates, and has no detectable transferase activity using glutathionylspermidine (GspSH) as the nucleophilic substrate. Is involved in defense against oxidative stress, probably via its peroxidase activity. The protein is Disulfide-bond oxidoreductase YfcG (yfcG) of Escherichia coli (strain K12).